The chain runs to 221 residues: Translation initiation factor 6 (221 aa).

Belongs to the eIF-6 family.

In terms of biological role, binds to the 50S ribosomal subunit and prevents its association with the 30S ribosomal subunit to form the 70S initiation complex. The polypeptide is Translation initiation factor 6 (Cenarchaeum symbiosum (strain A)).